Reading from the N-terminus, the 106-residue chain is Ribonuclease P protein component 4 (106 aa).

The Zn(2+) site is built by Cys62, Cys65, Cys88, and Cys91.

This sequence belongs to the eukaryotic/archaeal RNase P protein component 4 family. Consists of a catalytic RNA component and at least 4-5 protein subunits. Zn(2+) serves as cofactor.

It localises to the cytoplasm. It carries out the reaction Endonucleolytic cleavage of RNA, removing 5'-extranucleotides from tRNA precursor.. Functionally, part of ribonuclease P, a protein complex that generates mature tRNA molecules by cleaving their 5'-ends. The sequence is that of Ribonuclease P protein component 4 from Methanocorpusculum labreanum (strain ATCC 43576 / DSM 4855 / Z).